Reading from the N-terminus, the 82-residue chain is Large ribosomal subunit protein uL23 (82 aa).

This sequence belongs to the universal ribosomal protein uL23 family. As to quaternary structure, part of the 50S ribosomal subunit. Contacts protein L29.

Functionally, binds to 23S rRNA. One of the proteins that surrounds the polypeptide exit tunnel on the outside of the ribosome. This Methanosarcina mazei (strain ATCC BAA-159 / DSM 3647 / Goe1 / Go1 / JCM 11833 / OCM 88) (Methanosarcina frisia) protein is Large ribosomal subunit protein uL23.